The following is a 204-amino-acid chain: NADH-quinone oxidoreductase subunit C (204 aa).

Belongs to the complex I 30 kDa subunit family. In terms of assembly, NDH-1 is composed of 14 different subunits. Subunits NuoB, C, D, E, F, and G constitute the peripheral sector of the complex.

Its subcellular location is the cell inner membrane. It catalyses the reaction a quinone + NADH + 5 H(+)(in) = a quinol + NAD(+) + 4 H(+)(out). In terms of biological role, NDH-1 shuttles electrons from NADH, via FMN and iron-sulfur (Fe-S) centers, to quinones in the respiratory chain. The immediate electron acceptor for the enzyme in this species is believed to be ubiquinone. Couples the redox reaction to proton translocation (for every two electrons transferred, four hydrogen ions are translocated across the cytoplasmic membrane), and thus conserves the redox energy in a proton gradient. The protein is NADH-quinone oxidoreductase subunit C of Polaromonas naphthalenivorans (strain CJ2).